The primary structure comprises 88 residues: Small ribosomal subunit protein uS17 (88 aa).

The protein belongs to the universal ribosomal protein uS17 family. In terms of assembly, part of the 30S ribosomal subunit.

Its function is as follows. One of the primary rRNA binding proteins, it binds specifically to the 5'-end of 16S ribosomal RNA. In Azotobacter vinelandii (strain DJ / ATCC BAA-1303), this protein is Small ribosomal subunit protein uS17.